A 156-amino-acid polypeptide reads, in one-letter code: Small ribosomal subunit protein uS7c (156 aa).

The protein belongs to the universal ribosomal protein uS7 family. Part of the 30S ribosomal subunit.

The protein localises to the plastid. Its subcellular location is the chloroplast. In terms of biological role, one of the primary rRNA binding proteins, it binds directly to 16S rRNA where it nucleates assembly of the head domain of the 30S subunit. The protein is Small ribosomal subunit protein uS7c (rps7) of Chara vulgaris (Common stonewort).